The following is a 539-amino-acid chain: Peptide chain release factor 3 (539 aa).

The 270-residue stretch at 14–283 folds into the tr-type G domain; that stretch reads EKRRNFAIIS…AFLEYALQPE (270 aa). Residues 23-30, 91-95, and 145-148 contribute to the GTP site; these read SHPDAGKT, DTPGH, and NKLD.

It belongs to the TRAFAC class translation factor GTPase superfamily. Classic translation factor GTPase family. PrfC subfamily.

It is found in the cytoplasm. Functionally, increases the formation of ribosomal termination complexes and stimulates activities of RF-1 and RF-2. It binds guanine nucleotides and has strong preference for UGA stop codons. It may interact directly with the ribosome. The stimulation of RF-1 and RF-2 is significantly reduced by GTP and GDP, but not by GMP. This Rippkaea orientalis (strain PCC 8801 / RF-1) (Cyanothece sp. (strain PCC 8801)) protein is Peptide chain release factor 3.